The primary structure comprises 207 residues: MPPKKDAPVKKPAGPSISKPAAKSTPGTPLAKAKAEPAAPQAPAKSQEPPVDLSKVVIEFNKDQLEEFREAFELFDRVGDGKILYSQCGDLMRALGQNPTNAEVLKVLGNPKNEELKSRRVDFETFLPMLQAVAKNRDQGTYEDYLEGLRVFDKEGNGKVMGAELRHVLTTLGEKMTEEEVETVLAGHEDSNGCINYEAFLKHILSL.

Residues 1 to 50 are disordered; sequence MPPKKDAPVKKPAGPSISKPAAKSTPGTPLAKAKAEPAAPQAPAKSQEPP. The span at 36–50 shows a compositional bias: low complexity; sequence EPAAPQAPAKSQEPP. 3 consecutive EF-hand domains span residues 63–98, 140–175, and 175–207; these read DQLEEFREAFELFDRVGDGKILYSQCGDLMRALGQN, GTYEDYLEGLRVFDKEGNGKVMGAELRHVLTTLGEK, and KMTEEEVETVLAGHEDSNGCINYEAFLKHILSL.

As to quaternary structure, myosin is a hexamer of 2 heavy chains and 4 light chains.

Functionally, regulatory light chain of myosin. Does not bind calcium. The sequence is that of Myosin light chain 6B from Mus musculus (Mouse).